The primary structure comprises 249 residues: Type III pantothenate kinase (249 aa).

An ATP-binding site is contributed by 6–13 (DCGNSFIK). Residues Tyr93 and 100-103 (GLDR) each bind substrate. Asp102 serves as the catalytic Proton acceptor. Asp122 contributes to the K(+) binding site. Thr125 is a binding site for ATP. Thr181 is a binding site for substrate.

Belongs to the type III pantothenate kinase family. As to quaternary structure, homodimer. NH4(+) is required as a cofactor. K(+) serves as cofactor.

It localises to the cytoplasm. It carries out the reaction (R)-pantothenate + ATP = (R)-4'-phosphopantothenate + ADP + H(+). It participates in cofactor biosynthesis; coenzyme A biosynthesis; CoA from (R)-pantothenate: step 1/5. Functionally, catalyzes the phosphorylation of pantothenate (Pan), the first step in CoA biosynthesis. In Pseudomonas syringae pv. syringae (strain B728a), this protein is Type III pantothenate kinase.